We begin with the raw amino-acid sequence, 83 residues long: Large ribosomal subunit protein bL28 (83 aa).

It belongs to the bacterial ribosomal protein bL28 family.

This chain is Large ribosomal subunit protein bL28, found in Amoebophilus asiaticus (strain 5a2).